Reading from the N-terminus, the 366-residue chain is Chitoporin (366 aa).

A signal peptide spans 1–23; the sequence is MDKMFKRTVIGAAVALASTGLMA.

It belongs to the Gram-negative porin family.

It is found in the cell outer membrane. In terms of biological role, involved in the uptake of chitosugars. This is Chitoporin (chiP) from Vibrio furnissii.